The primary structure comprises 332 residues: MSDINKPFLVVIVGPTASGKTELSIELAKQINGEIISGDSMQVYKQMDIGTAKVTNEEMDGIPHYMIDILNPDDSFSVYDFKLRAQALIEDITSRGKIPIIAGGTGLYIQSLIYDYPFDDETVSKEVEQKTQLQLQKLEPLTNQEVHDYLATFDPQSAKDIHPNNRKRVLRAIEYYLNTKKLISSRKKVQQFTENYDTLLIGIEMSRKTLYSRINKRVDIMLGHGLFNEVKNLVEQGYESTQSMQAIGYKELVPVVNGELSIDQAVETLKQHSRQYAKRQLTWFKNKLTVQWFNRETMSLQMMLDEITTQINKRSSKHDCKPQHPRSSTREL.

Residue 14–21 coordinates ATP; that stretch reads GPTASGKT. A substrate-binding site is contributed by 16–21; that stretch reads TASGKT. The segment at 39–42 is interaction with substrate tRNA; the sequence is DSMQ. A disordered region spans residues 313–332; it reads KRSSKHDCKPQHPRSSTREL. The segment covering 317 to 332 has biased composition (basic and acidic residues); that stretch reads KHDCKPQHPRSSTREL.

Belongs to the IPP transferase family. In terms of assembly, monomer. Requires Mg(2+) as cofactor.

The catalysed reaction is adenosine(37) in tRNA + dimethylallyl diphosphate = N(6)-dimethylallyladenosine(37) in tRNA + diphosphate. In terms of biological role, catalyzes the transfer of a dimethylallyl group onto the adenine at position 37 in tRNAs that read codons beginning with uridine, leading to the formation of N6-(dimethylallyl)adenosine (i(6)A). This is tRNA dimethylallyltransferase from Staphylococcus haemolyticus (strain JCSC1435).